A 659-amino-acid chain; its full sequence is Ion-translocating oxidoreductase complex subunit C (659 aa).

4Fe-4S ferredoxin-type domains are found at residues 366–397 and 407–436; these read TEMG…QQLY and KARN…VQYY. [4Fe-4S] cluster contacts are provided by Cys-377, Cys-380, Cys-383, Cys-387, Cys-416, Cys-419, Cys-422, and Cys-426.

Belongs to the 4Fe4S bacterial-type ferredoxin family. RnfC subfamily. In terms of assembly, the complex is composed of six subunits: RnfA, RnfB, RnfC, RnfD, RnfE and RnfG. It depends on [4Fe-4S] cluster as a cofactor.

It is found in the cell inner membrane. In terms of biological role, part of a membrane-bound complex that couples electron transfer with translocation of ions across the membrane. This chain is Ion-translocating oxidoreductase complex subunit C, found in Yersinia pseudotuberculosis serotype IB (strain PB1/+).